A 66-amino-acid chain; its full sequence is MAFLKKSLFLVLFLGLVSLSICDEEKRQDEDDDDDDDEEKRGVFDIIKDAGKQLVAHAMGKIAEKV.

The signal sequence occupies residues 1–22; the sequence is MAFLKKSLFLVLFLGLVSLSIC. Residues 23–39 constitute a propeptide that is removed on maturation; it reads DEEKRQDEDDDDDDDEE. Valine amide is present on valine 66.

As to expression, expressed by the skin glands.

Its subcellular location is the secreted. In terms of biological role, has antibacterial activity against Gram-negative bacterium E.coli ATCC 25922 (MIC=300 uM) but not against S.pneumoniae ATCC 700603, S.choleraesuis ATCC 14028 or Gram-positive bacterium S.aureus ATCC 29313. Shows virtually no hemolytic activity and no cytotoxicity. In Leptodactylus pustulatus (Ceara white-lipped frog), this protein is Ocellatin-PT1.